We begin with the raw amino-acid sequence, 154 residues long: Toxin YhaV (154 aa).

Homohexamer; forms a complex with PrlF (SohA) with stoichiometry PrlF(2)-YhaV(4), possibly as a YhaV(2)-PrlF(2)-YhaV(2) complex like the MazFE complex. May dimerize in solution.

In terms of biological role, toxic component of a type II toxin-antitoxin (TA) system. Has RNase activity in vitro. Acts as a transcription factor. The YhaV/PrlF complex binds the prlF-yhaV operon, probably negatively regulating its expression. This Escherichia coli O157:H7 protein is Toxin YhaV (yhaV).